Consider the following 293-residue polypeptide: Epidermal growth factor-like protein 8 (293 aa).

A signal peptide spans 1 to 25; sequence MGSRAELCTLLGGFSFLLLLIPGEG. Positions 34–112 constitute an EMI domain; that stretch reads SQGVCSKQTL…RHPGALTCEA (79 aa). 9 disulfides stabilise this stretch: Cys38–Cys97, Cys65–Cys71, Cys96–Cys110, Cys114–Cys124, Cys118–Cys130, Cys132–Cys141, Cys148–Cys159, Cys155–Cys168, and Cys170–Cys183. A glycan (N-linked (GlcNAc...) asparagine) is linked at Asn50. The EGF-like 1 domain maps to 111 to 142; that stretch reads EAICAKPCLNGGVCVRPDQCECAPGWGGKHCH. The EGF-like 2; calcium-binding domain maps to 144-184; sequence DVDECRTSITLCSHHCFNTAGSFTCGCPHDLVLGVDGRTCM. A coiled-coil region spans residues 195–232; it reads SILSVAVREAEKDERALKQEIHELRGRLERLEQWAGQA.

Its subcellular location is the secreted. The sequence is that of Epidermal growth factor-like protein 8 (EGFL8) from Homo sapiens (Human).